The chain runs to 126 residues: Aspartate 1-decarboxylase (126 aa).

Ser-25 acts as the Schiff-base intermediate with substrate; via pyruvic acid in catalysis. Ser-25 bears the Pyruvic acid (Ser) mark. Residue Thr-57 coordinates substrate. Tyr-58 functions as the Proton donor in the catalytic mechanism. 73-75 (GAA) contributes to the substrate binding site.

Belongs to the PanD family. As to quaternary structure, heterooctamer of four alpha and four beta subunits. Pyruvate serves as cofactor. In terms of processing, is synthesized initially as an inactive proenzyme, which is activated by self-cleavage at a specific serine bond to produce a beta-subunit with a hydroxyl group at its C-terminus and an alpha-subunit with a pyruvoyl group at its N-terminus.

It is found in the cytoplasm. It carries out the reaction L-aspartate + H(+) = beta-alanine + CO2. The protein operates within cofactor biosynthesis; (R)-pantothenate biosynthesis; beta-alanine from L-aspartate: step 1/1. In terms of biological role, catalyzes the pyruvoyl-dependent decarboxylation of aspartate to produce beta-alanine. This Serratia proteamaculans (strain 568) protein is Aspartate 1-decarboxylase.